The primary structure comprises 146 residues: Ninjurin-1 (146 aa).

The segment at 1-33 (MASEAMELNGGVNRRDDPGARPQQGRMSRNTPL) is disordered. Residues 1-75 (MASEAMELNG…ELGPSFSFYI (75 aa)) are Extracellular-facing. Residues 37-66 (HYANKKSAAESMLDIALLMANASQLKTVLE) are required to induce plasma membrane rupture. The interval 41–52 (KKSAAESMLDIA) is helix alpha1. The helix alpha2 stretch occupies residues 55 to 71 (MANASQLKTVLELGPSF). N-linked (GlcNAc...) asparagine glycosylation is present at Asn-57. A helical membrane pass occupies residues 76-100 (PLITLISISLTLQIIVGILLIFIVK). Topologically, residues 101 to 110 (WNLNDSSKHY) are cytoplasmic. A helical transmembrane segment spans residues 111–135 (ILNLLENIVTALVFIVVVVNVFITA). The Extracellular portion of the chain corresponds to 136–146 (FGVQRPDDKTS).

This sequence belongs to the ninjurin family. Homooligomer; in response to death stimuli, homooligomerizes into long, highly branched filaments and large, ring-shaped structures in the membrane. As to quaternary structure, homodimer; in absence of death stimuli, forms an inactive homodimer. Homooligomer; in response to death stimuli, homooligomerizes into long, highly branched filaments and large, ring-shaped structures in the membrane.

The protein resides in the cell membrane. It is found in the synaptic cell membrane. Its activity is regulated as follows. In normal conditions, NINJ1 is inactivated. In response to death stimuli, homooligomerizes and disrupts membrane integrity by introducing the hydrophilic faces of alpha1 and alpha2 helices into the hydrophobic membrane. Homooligomerization and ability to mediate plasma membrane rupture is inhibited by glycine; it is unclear whether glycine directly or indirectly inhibits homooligomerization. In response to death stimuli, homooligomerizes and disrupts membrane integrity by introducing the hydrophilic faces of alpha1 and alpha2 helices into the hydrophobic membrane. Homooligomerization and ability to mediate plasma membrane rupture is inhibited by glycine; it is unclear whether glycine directly or indirectly inhibits homooligomerization. In normal conditions, NINJ1 is autoinhibited via formation of a homodimer: in the inactive homodimer, the alpha1 and alpha2 helices (residues 41-71) form a single transmembrane region without a kink, in which hydrophilic faces of alpha1 and alpha2 helices are sequestered. In terms of biological role, effector of various programmed cell death, such as pyroptosis and necroptosis, which mediates plasma membrane rupture (cytolysis). Oligomerizes in response to death stimuli and forms ring-like structures on the plasma membrane: acts by cutting and shedding membrane disks, like a cookie cutter, leading to membrane damage and loss that cannot be repaired by the cell. Plasma membrane rupture leads to release intracellular molecules named damage-associated molecular patterns (DAMPs) that propagate the inflammatory response. Mechanistically, mediates plasma membrane rupture by introducing hydrophilic faces of 2 alpha helices into the hydrophobic membrane. Induces plasma membrane rupture downstream of Gasdermin (GSDMA, GSDMB, GSDMC, GSDMD, or GSDME) or MLKL during pyroptosis or necroptosis, respectively. Also acts as an effector of PANoptosis and ferroptosis. Induces plasma membrane rupture in response to cell swelling caused by osmotic stress. Acts as a regulator of Toll-like receptor 4 (TLR4) signaling triggered by lipopolysaccharide (LPS) during systemic inflammation; directly binds LPS. Involved in leukocyte migration during inflammation by promoting transendothelial migration of macrophages via homotypic binding. Promotes the migration of monocytes across the brain endothelium to central nervous system inflammatory lesions. Also acts as a homophilic transmembrane adhesion molecule involved in various processes such as axonal growth, cell chemotaxis and angiogenesis. Promotes cell adhesion by mediating homophilic interactions via its extracellular N-terminal adhesion motif (N-NAM). Also involved in striated muscle growth and differentiation. The chain is Ninjurin-1 from Danio rerio (Zebrafish).